A 468-amino-acid chain; its full sequence is Ribulose bisphosphate carboxylase large chain (468 aa).

K5 carries the post-translational modification N6,N6,N6-trimethyllysine. Residues N114 and T164 each contribute to the substrate site. Catalysis depends on K166, which acts as the Proton acceptor. A substrate-binding site is contributed by K168. Mg(2+) contacts are provided by K192, D194, and E195. At K192 the chain carries N6-carboxylysine. The active-site Proton acceptor is H285. Substrate is bound by residues R286, H318, and S370.

It belongs to the RuBisCO large chain family. Type I subfamily. Heterohexadecamer of 8 large chains and 8 small chains; disulfide-linked. The disulfide link is formed within the large subunit homodimers. The cofactor is Mg(2+). In terms of processing, the disulfide bond which can form in the large chain dimeric partners within the hexadecamer appears to be associated with oxidative stress and protein turnover.

It localises to the plastid. It is found in the chloroplast. It carries out the reaction 2 (2R)-3-phosphoglycerate + 2 H(+) = D-ribulose 1,5-bisphosphate + CO2 + H2O. The enzyme catalyses D-ribulose 1,5-bisphosphate + O2 = 2-phosphoglycolate + (2R)-3-phosphoglycerate + 2 H(+). RuBisCO catalyzes two reactions: the carboxylation of D-ribulose 1,5-bisphosphate, the primary event in carbon dioxide fixation, as well as the oxidative fragmentation of the pentose substrate in the photorespiration process. Both reactions occur simultaneously and in competition at the same active site. This chain is Ribulose bisphosphate carboxylase large chain, found in Tecoma stans (Yellow bells).